The primary structure comprises 1086 residues: Phosphinothricin tripeptide synthetase PhsC (1086 aa).

Residues 22 to 43 (RLRAAAAPGPDPAIPRRPDDDG) are disordered. Positions 45–484 (VPLSFAQHRL…LAALPVLTRD (440 aa)) are condensation. The interval 510-901 (LEDSARRHPD…GRTDHQVKLR (392 aa)) is adenylation. Positions 983-1007 (GKLDREALPDPLAQSGDTAGNRPPL) are disordered. Residues 1006–1081 (PLLDPVEERI…GLARSVSAER (76 aa)) form the Carrier domain. S1041 carries the post-translational modification O-(pantetheine 4'-phosphoryl)serine.

It belongs to the NRP synthetase family. It depends on pantetheine 4'-phosphate as a cofactor.

It catalyses the reaction holo-[peptidyl-carrier protein] + L-alanine + ATP = L-alanyl-[peptidyl-carrier protein] + AMP + diphosphate. The protein operates within secondary metabolite biosynthesis; bialaphos biosynthesis. Its function is as follows. Involved in the biosynthesis of phosphinothricin tripeptide (PTT), also known as bialaphos (BA), a natural-product antibiotic and potent herbicide. Adenylates L-alanine and loads it onto a peptidyl carrier domain via a thioester linkage to the phosphopanthetheine moiety. Shows weaker activity with aminobutyric acid and L-serine. This is Phosphinothricin tripeptide synthetase PhsC from Streptomyces viridochromogenes (strain DSM 40736 / JCM 4977 / BCRC 1201 / Tue 494).